The primary structure comprises 215 residues: Na(+)-translocating NADH-quinone reductase subunit D (215 aa).

The next 6 membrane-spanning stretches (helical) occupy residues 14-34 (PFISNNPIMLQVLGICSALAV), 42-62 (FVMALAVTVVTGFSNLFISLI), 72-92 (IIVQMTIIASLVIVVDQLLKA), 103-123 (VFVGLIITNCIVMGRAEAYAM), 131-151 (FLDGIGNGLGYGFILLLVGTI), and 178-198 (NGMLLMPPSAFFLIGLFIWVL).

Belongs to the NqrDE/RnfAE family. In terms of assembly, composed of six subunits; NqrA, NqrB, NqrC, NqrD, NqrE and NqrF.

The protein resides in the cell inner membrane. It carries out the reaction a ubiquinone + n Na(+)(in) + NADH + H(+) = a ubiquinol + n Na(+)(out) + NAD(+). Its function is as follows. NQR complex catalyzes the reduction of ubiquinone-1 to ubiquinol by two successive reactions, coupled with the transport of Na(+) ions from the cytoplasm to the periplasm. NqrA to NqrE are probably involved in the second step, the conversion of ubisemiquinone to ubiquinol. This is Na(+)-translocating NADH-quinone reductase subunit D from Tolumonas auensis (strain DSM 9187 / NBRC 110442 / TA 4).